An 802-amino-acid polypeptide reads, in one-letter code: Phenylalanine--tRNA ligase beta subunit (802 aa).

Residues Ser38–Ser148 form the tRNA-binding domain. A B5 domain is found at Val403–Ala478. Residues Asp456, Asp462, and Asp466 each coordinate Mg(2+). Residues Ser703–Arg796 form the FDX-ACB domain.

It belongs to the phenylalanyl-tRNA synthetase beta subunit family. Type 1 subfamily. In terms of assembly, tetramer of two alpha and two beta subunits. It depends on Mg(2+) as a cofactor.

It is found in the cytoplasm. The enzyme catalyses tRNA(Phe) + L-phenylalanine + ATP = L-phenylalanyl-tRNA(Phe) + AMP + diphosphate + H(+). This is Phenylalanine--tRNA ligase beta subunit from Buchnera aphidicola subsp. Baizongia pistaciae (strain Bp).